A 308-amino-acid polypeptide reads, in one-letter code: HTH-type transcriptional regulator SsuR (308 aa).

Residues 1 to 59 (MNFQQLRFVREAVRQNMNLTEVANVLYTSQSGVSKQIKDLEDELGVDIFIRRGKRLTGL) enclose the HTH lysR-type domain. A DNA-binding region (H-T-H motif) is located at residues 19–38 (LTEVANVLYTSQSGVSKQIK).

This sequence belongs to the LysR transcriptional regulatory family.

Functionally, transcriptional regulator that is essential for the utilization of a number of organic sulfur sources of either environmental or human origin. Required for aliphatic sulfonate utilization. Binds to DNA at target promoter regions. Targets include the ssuDBC operon, the tauABC operon, three tauD-type genes and atsA. The chain is HTH-type transcriptional regulator SsuR from Burkholderia cenocepacia (strain ATCC BAA-245 / DSM 16553 / LMG 16656 / NCTC 13227 / J2315 / CF5610) (Burkholderia cepacia (strain J2315)).